A 468-amino-acid polypeptide reads, in one-letter code: 55 kDa erythrocyte membrane protein (468 aa).

One can recognise a PDZ domain in the interval 73–154 (LVQFEKVTEE…MVSIKVIPNQ (82 aa)). Residues 160–230 (ALQMFMRAQF…PSPELQEWRV (71 aa)) enclose the SH3 domain. Residues 284–453 (RKTLVLIGAS…SLKLLEEAFE (170 aa)) form the Guanylate kinase-like domain.

Belongs to the MAGUK family.

It localises to the membrane. It is found in the cell projection. Its subcellular location is the stereocilium. In terms of biological role, may play a role in the regulation of neutrophil polarization. This is 55 kDa erythrocyte membrane protein (MPP1) from Gallus gallus (Chicken).